A 169-amino-acid chain; its full sequence is Secreted LysM effector Blys5 (169 aa).

The first 19 residues, 1-19, serve as a signal peptide directing secretion; that stretch reads MKLSVISAVFVSLAAAAAA. LysM domains are found at residues 47 to 94 and 121 to 167; these read TYYQ…YYCV and QWYK…NVCV.

The protein belongs to the secreted LysM effector family.

Functionally, secreted effector that enables the plant pathogenic fungus to manipulate host defenses for successful infection. Required for the full virulence to infect insect hosts. Protects fungal hyphae against the hydrolytic activity of chitinase and plays an important role in evasion of insect immunities. Binds chitin and can additionally bind chitosan and cellulose. Coats and protects the cell walls of insect pathogens from host cell recognition and additionally shields fungal cells from the hydrolysis of insect chitinases. The chain is Secreted LysM effector Blys5 from Beauveria bassiana (strain ARSEF 2860) (White muscardine disease fungus).